The chain runs to 874 residues: Leucine--tRNA ligase (874 aa).

The 'HIGH' region motif lies at 47-57 (PYPSGKLHMGH). A 'KMSKS' region motif is present at residues 636 to 640 (KMSKS). Lysine 639 is a binding site for ATP.

This sequence belongs to the class-I aminoacyl-tRNA synthetase family.

Its subcellular location is the cytoplasm. It catalyses the reaction tRNA(Leu) + L-leucine + ATP = L-leucyl-tRNA(Leu) + AMP + diphosphate. In Acinetobacter baumannii (strain SDF), this protein is Leucine--tRNA ligase.